A 123-amino-acid chain; its full sequence is Immunoglobulin heavy variable 4-34 (123 aa).

The signal sequence occupies residues 1–26 (MDLLHKNMKHLWFFLLLVAAPRWVLS). The v region stretch occupies residues 26–123 (SQVQLQQWGA…ADTAVYYCAR (98 aa)). Residues 27-51 (QVQLQQWGAGLLKPSETLSLTCAVY) are framework-1. Residues 27-123 (QVQLQQWGAG…ADTAVYYCAR (97 aa)) form the Ig-like domain. An intrachain disulfide couples cysteine 48 to cysteine 121. Positions 52-59 (GGSFSGYY) are complementarity-determining-1. Residues 60–76 (WSWIRQPPGKGLEWIGE) form a framework-2 region. The tract at residues 77–83 (INHSGST) is complementarity-determining-2. An N-linked (GlcNAc...) asparagine glycan is attached at asparagine 78. The tract at residues 84 to 121 (NYNPSLKSRVTISVDTSKNQFSLKLSSVTAADTAVYYC) is framework-3. A complementarity-determining-3 region spans residues 122-123 (AR).

In terms of assembly, immunoglobulins are composed of two identical heavy chains and two identical light chains; disulfide-linked.

The protein resides in the secreted. The protein localises to the cell membrane. In terms of biological role, v region of the variable domain of immunoglobulin heavy chains that participates in the antigen recognition. Immunoglobulins, also known as antibodies, are membrane-bound or secreted glycoproteins produced by B lymphocytes. In the recognition phase of humoral immunity, the membrane-bound immunoglobulins serve as receptors which, upon binding of a specific antigen, trigger the clonal expansion and differentiation of B lymphocytes into immunoglobulins-secreting plasma cells. Secreted immunoglobulins mediate the effector phase of humoral immunity, which results in the elimination of bound antigens. The antigen binding site is formed by the variable domain of one heavy chain, together with that of its associated light chain. Thus, each immunoglobulin has two antigen binding sites with remarkable affinity for a particular antigen. The variable domains are assembled by a process called V-(D)-J rearrangement and can then be subjected to somatic hypermutations which, after exposure to antigen and selection, allow affinity maturation for a particular antigen. The sequence is that of Immunoglobulin heavy variable 4-34 from Homo sapiens (Human).